The primary structure comprises 680 residues: DNA-directed RNA polymerase subunit beta' (680 aa).

Zn(2+)-binding residues include Cys69, Cys71, Cys87, and Cys90. 3 residues coordinate Mg(2+): Asp489, Asp491, and Asp493.

This sequence belongs to the RNA polymerase beta' chain family. RpoC1 subfamily. In plastids the minimal PEP RNA polymerase catalytic core is composed of four subunits: alpha, beta, beta', and beta''. When a (nuclear-encoded) sigma factor is associated with the core the holoenzyme is formed, which can initiate transcription. It depends on Mg(2+) as a cofactor. Zn(2+) is required as a cofactor.

It is found in the plastid. The protein resides in the chloroplast. The enzyme catalyses RNA(n) + a ribonucleoside 5'-triphosphate = RNA(n+1) + diphosphate. Its function is as follows. DNA-dependent RNA polymerase catalyzes the transcription of DNA into RNA using the four ribonucleoside triphosphates as substrates. This chain is DNA-directed RNA polymerase subunit beta', found in Nasturtium officinale (Watercress).